We begin with the raw amino-acid sequence, 431 residues long: Trigger factor (431 aa).

In terms of domain architecture, PPIase FKBP-type spans 158-243; that stretch reads GDLVAVETWS…VAEVSEPVVP (86 aa).

It belongs to the FKBP-type PPIase family. Tig subfamily.

It localises to the cytoplasm. It catalyses the reaction [protein]-peptidylproline (omega=180) = [protein]-peptidylproline (omega=0). Its function is as follows. Involved in protein export. Acts as a chaperone by maintaining the newly synthesized protein in an open conformation. Functions as a peptidyl-prolyl cis-trans isomerase. The chain is Trigger factor from Stenotrophomonas maltophilia (strain R551-3).